The chain runs to 336 residues: Dihydroorotate dehydrogenase (quinone) (336 aa).

FMN-binding positions include 62-66 (AGLDK) and Thr86. A substrate-binding site is contributed by Lys66. 111–115 (NRMGF) serves as a coordination point for substrate. 2 residues coordinate FMN: Asn139 and Asn172. Asn172 contacts substrate. The Nucleophile role is filled by Ser175. Asn177 contributes to the substrate binding site. The FMN site is built by Lys217 and Thr245. Residue 246 to 247 (NT) coordinates substrate. FMN-binding positions include Gly268, Gly297, and 318–319 (YS).

This sequence belongs to the dihydroorotate dehydrogenase family. Type 2 subfamily. In terms of assembly, monomer. Requires FMN as cofactor.

The protein localises to the cell membrane. The enzyme catalyses (S)-dihydroorotate + a quinone = orotate + a quinol. Its pathway is pyrimidine metabolism; UMP biosynthesis via de novo pathway; orotate from (S)-dihydroorotate (quinone route): step 1/1. In terms of biological role, catalyzes the conversion of dihydroorotate to orotate with quinone as electron acceptor. This is Dihydroorotate dehydrogenase (quinone) from Aeromonas salmonicida (strain A449).